Reading from the N-terminus, the 512-residue chain is Kynurenine 3-monooxygenase (512 aa).

The protein belongs to the aromatic-ring hydroxylase family. KMO subfamily. FAD is required as a cofactor.

The protein resides in the mitochondrion outer membrane. It carries out the reaction L-kynurenine + NADPH + O2 + H(+) = 3-hydroxy-L-kynurenine + NADP(+) + H2O. The protein operates within cofactor biosynthesis; NAD(+) biosynthesis; quinolinate from L-kynurenine: step 1/3. In terms of biological role, catalyzes the hydroxylation of L-kynurenine (L-Kyn) to form 3-hydroxy-L-kynurenine (L-3OHKyn). Required for synthesis of quinolinic acid. The sequence is that of Kynurenine 3-monooxygenase (bna4) from Aspergillus clavatus (strain ATCC 1007 / CBS 513.65 / DSM 816 / NCTC 3887 / NRRL 1 / QM 1276 / 107).